Reading from the N-terminus, the 171-residue chain is Ribosome maturation factor RimM (171 aa).

A PRC barrel domain is found at 97-170; the sequence is KLNYFSWDHY…IIYMKLPVGL (74 aa).

The protein belongs to the RimM family. As to quaternary structure, binds ribosomal protein uS19.

The protein resides in the cytoplasm. An accessory protein needed during the final step in the assembly of 30S ribosomal subunit, possibly for assembly of the head region. Essential for efficient processing of 16S rRNA. May be needed both before and after RbfA during the maturation of 16S rRNA. It has affinity for free ribosomal 30S subunits but not for 70S ribosomes. The polypeptide is Ribosome maturation factor RimM (Azobacteroides pseudotrichonymphae genomovar. CFP2).